The primary structure comprises 456 residues: Putative alanyl-tRNA editing protein alaX (456 aa).

Zn(2+)-binding residues include His-125, His-129, Cys-240, and His-244.

Belongs to the class-II aminoacyl-tRNA synthetase family. Alax-L subfamily. The cofactor is Zn(2+).

In terms of biological role, may function in trans to edit the amino acid moiety from incorrectly charged tRNA(Ala). The sequence is that of Putative alanyl-tRNA editing protein alaX from Saccharomyces cerevisiae (strain ATCC 204508 / S288c) (Baker's yeast).